A 361-amino-acid chain; its full sequence is 3-dehydroquinate synthase (361 aa).

It belongs to the archaeal-type DHQ synthase family.

It catalyses the reaction 2-amino-2,3,7-trideoxy-D-lyxo-hept-6-ulosonate + NAD(+) + H2O = 3-dehydroquinate + NH4(+) + NADH + H(+). In terms of biological role, catalyzes the oxidative deamination and cyclization of 2-amino-3,7-dideoxy-D-threo-hept-6-ulosonic acid (ADH) to yield 3-dehydroquinate (DHQ), which is fed into the canonical shikimic pathway of aromatic amino acid biosynthesis. This is 3-dehydroquinate synthase from Methanococcus maripaludis (strain C6 / ATCC BAA-1332).